Reading from the N-terminus, the 349-residue chain is Nicotinate-nucleotide--dimethylbenzimidazole phosphoribosyltransferase (349 aa).

Glu-318 serves as the catalytic Proton acceptor.

This sequence belongs to the CobT family.

It carries out the reaction 5,6-dimethylbenzimidazole + nicotinate beta-D-ribonucleotide = alpha-ribazole 5'-phosphate + nicotinate + H(+). Its pathway is nucleoside biosynthesis; alpha-ribazole biosynthesis; alpha-ribazole from 5,6-dimethylbenzimidazole: step 1/2. Catalyzes the synthesis of alpha-ribazole-5'-phosphate from nicotinate mononucleotide (NAMN) and 5,6-dimethylbenzimidazole (DMB). This is Nicotinate-nucleotide--dimethylbenzimidazole phosphoribosyltransferase from Geobacter sp. (strain M21).